We begin with the raw amino-acid sequence, 356 residues long: Caspase activity and apoptosis inhibitor 1 (356 aa).

Residues 1 to 14 (MTGKKSSREKRRKR) show a composition bias toward basic residues. Disordered stretches follow at residues 1-24 (MTGKKSSREKRRKRSGQEAAASLA) and 54-80 (VAGGAERSERRKRRSTDSSSSVSGSLQ). Residue serine 68 is modified to Phosphoserine. Threonine 69 is modified (phosphothreonine). Lysine 84 is covalently cross-linked (Glycyl lysine isopeptide (Lys-Gly) (interchain with G-Cter in SUMO2)). Phosphoserine occurs at positions 100 and 183. Residues 208–234 (DSTSSLRENKQPEVLESKQGKGEDSDV) form a disordered region. A compositionally biased stretch (basic and acidic residues) spans 214–231 (RENKQPEVLESKQGKGED). A coiled-coil region spans residues 276–306 (ENTVQSEAGQIDDLERDIEKSVNEILGLAES). The residue at position 307 (serine 307) is a Phosphoserine.

Functionally, anti-apoptotic protein that modulates a caspase-10 dependent mitochondrial caspase-3/9 feedback amplification loop. The polypeptide is Caspase activity and apoptosis inhibitor 1 (Caap1) (Mus musculus (Mouse)).